Reading from the N-terminus, the 199-residue chain is Large ribosomal subunit protein mL51 (199 aa).

The transit peptide at 1 to 15 (MNSASISRLTSVIRT) directs the protein to the mitochondrion.

This sequence belongs to the mitochondrion-specific ribosomal protein mL51 family. In terms of assembly, component of the mitochondrial ribosome large subunit (39S) which comprises a 16S rRNA and about 50 distinct proteins.

The protein localises to the mitochondrion. In Caenorhabditis briggsae, this protein is Large ribosomal subunit protein mL51 (mrpl-51).